The primary structure comprises 121 residues: Surface glycoprotein CD59 homolog (121 aa).

Residues 1–19 form the signal peptide; the sequence is MYILFTLVLTFVFCKPIHS. The UPAR/Ly6 domain occupies 20-104; that stretch reads LQCYNCSHST…ENIKRTISDK (85 aa). 5 disulfide bridges follow: cysteine 22–cysteine 45, cysteine 25–cysteine 32, cysteine 38–cysteine 58, cysteine 64–cysteine 82, and cysteine 83–cysteine 88. N-linked (GlcNAc...) asparagine; by host glycosylation occurs at asparagine 24. Residue asparagine 96 is the site of GPI-anchor amidated asparagine; by host attachment. A propeptide spans 97-121 (removed in mature form); that stretch reads IKRTISDKALLLLALFLVTAWNFPL.

Its subcellular location is the host cell membrane. This is Surface glycoprotein CD59 homolog (15) from Saimiriine herpesvirus 2 (strain 11) (SaHV-2).